We begin with the raw amino-acid sequence, 240 residues long: uncharacterized protein (240 aa).

The tract at residues 1 to 27 (MKDLQKKSSVRRQITNEDDERYGEDSI) is disordered. 2 positions are modified to phosphoserine: Ser-59 and Ser-95. The disordered stretch occupies residues 189–227 (RTPSPTGKSVGDEATSNNMHSSSAIRNPNGPTVDPEEGK). Residues 202–218 (ATSNNMHSSSAIRNPNG) are compositionally biased toward polar residues.

This is an uncharacterized protein from Saccharomyces cerevisiae (strain ATCC 204508 / S288c) (Baker's yeast).